The primary structure comprises 315 residues: Secreted mono- and diacylglycerol lipase LIP2 (315 aa).

The N-terminal stretch at 1-21 (MACFRVILYLSVIFFVQCVFA) is a signal peptide. A disulfide bridge connects residues C68 and C308. N74 is a glycosylation site (N-linked (GlcNAc...) asparagine). The active-site Nucleophile is S182. D240 is a catalytic residue. A glycan (N-linked (GlcNAc...) asparagine) is linked at N265. H292 is an active-site residue.

Belongs to the AB hydrolase superfamily. Lipase family. Class 3 subfamily.

The protein localises to the secreted. The catalysed reaction is a monoacylglycerol + H2O = glycerol + a fatty acid + H(+). It carries out the reaction a diacylglycerol + H2O = a monoacylglycerol + a fatty acid + H(+). Secreted lipase involved in Dandruff and seborrheic dermatitis (D/SD) probably via lipase-mediated breakdown of sebaceous lipids and release of irritating free fatty acids. Shows activity against monoglyceride and diglyceride substrates and generates free oleic acid from the substrates mono- and diolein. Able to cleave the oleic acid from both the 1 and the 2 position of the glycerol backbone as 1,2 isomers of diolein were converted into oleic acid and glycerol. Due to an absence of fatty acid synthase genes in Malassezia species, secretory lipases are essential for the yeast to generate free fatty acids from degradation of sebum and assimilate them as lipid sources for growth. Plays an essential role at the pathogen-host interface during disease progression. Also performs the reverse reaction to build diacylglycerols from monoacylglycerols. This Malassezia restricta (strain ATCC 96810 / NBRC 103918 / CBS 7877) (Seborrheic dermatitis infection agent) protein is Secreted mono- and diacylglycerol lipase LIP2.